The following is a 252-amino-acid chain: 2-succinyl-6-hydroxy-2,4-cyclohexadiene-1-carboxylate synthase (252 aa).

Belongs to the AB hydrolase superfamily. MenH family. As to quaternary structure, monomer.

It catalyses the reaction 5-enolpyruvoyl-6-hydroxy-2-succinyl-cyclohex-3-ene-1-carboxylate = (1R,6R)-6-hydroxy-2-succinyl-cyclohexa-2,4-diene-1-carboxylate + pyruvate. The protein operates within quinol/quinone metabolism; 1,4-dihydroxy-2-naphthoate biosynthesis; 1,4-dihydroxy-2-naphthoate from chorismate: step 3/7. It participates in quinol/quinone metabolism; menaquinone biosynthesis. Functionally, catalyzes a proton abstraction reaction that results in 2,5-elimination of pyruvate from 2-succinyl-5-enolpyruvyl-6-hydroxy-3-cyclohexene-1-carboxylate (SEPHCHC) and the formation of 2-succinyl-6-hydroxy-2,4-cyclohexadiene-1-carboxylate (SHCHC). The protein is 2-succinyl-6-hydroxy-2,4-cyclohexadiene-1-carboxylate synthase of Citrobacter koseri (strain ATCC BAA-895 / CDC 4225-83 / SGSC4696).